Here is a 954-residue protein sequence, read N- to C-terminus: E3 ubiquitin-protein ligase arkadia (954 aa).

Residues 50–66 (LCSDTNKQQRDLNSNGT) are compositionally biased toward polar residues. 2 disordered regions span residues 50-175 (LCSD…VSSL) and 193-276 (RKRF…SGGM). 2 stretches are compositionally biased toward low complexity: residues 112-131 (SSFSDCISSPSSSSHFGDSD) and 232-251 (SSSSSSENDLSSESSSSSST). The short motif at 280–284 (VVVIE) is the SUMO interaction motif 1 (SIM) element. The SUMO interaction motif 2 (SIM) signature appears at 305–311 (EVEIVTV). 3 disordered regions span residues 318-346 (RTTLGHPRSHWGQNTQSGRTQEQRTRNRV), 364-452 (TVDE…MPRL), and 485-509 (HFPHHHHHHHQSSHPGVPLSPSFRD). The segment covering 328 to 337 (WGQNTQSGRT) has biased composition (polar residues). The short motif at 360–364 (VVDLT) is the SUMO interaction motif 3 (SIM) element. A compositionally biased stretch (low complexity) spans 385–395 (VSTVSSNTSTS). Basic residues predominate over residues 485 to 496 (HFPHHHHHHHQS). Positions 867–869 (YPH) are ubiquitin binding. Residues Cys902 and Cys905 each coordinate Zn(2+). The segment at 902 to 943 (CTICLSILEEGEDVRRLPCMHLFHQVCVDQWLITNKKCPICR) adopts an RING-type; atypical zinc-finger fold. The interval 917–921 (RLPCM) is ubiquitin binding. His925 and Cys928 together coordinate Zn(2+).

This sequence belongs to the Arkadia family. As to quaternary structure, monomer.

It is found in the nucleus. Its subcellular location is the cytoplasm. It localises to the PML body. It catalyses the reaction S-ubiquitinyl-[E2 ubiquitin-conjugating enzyme]-L-cysteine + [acceptor protein]-L-lysine = [E2 ubiquitin-conjugating enzyme]-L-cysteine + N(6)-ubiquitinyl-[acceptor protein]-L-lysine.. The protein operates within protein modification; protein ubiquitination. Its activity is regulated as follows. Binds free ubiquitin non-covalently via its RING-type zinc finger. Ubiquitin-binding leads to enhance the E3 ubiquitin-protein ligase activity by stabilizing the ubiquitin-conjugating enzyme E2 (donor ubiquitin) in the 'closed' conformation and activating ubiquitin transfer. E3 ubiquitin-protein ligase required for mesoderm patterning during embryonic development. Acts as an enhancer of the transcriptional responses of the smad2/smad3 effectors, which are activated downstream of BMP. Acts by mediating ubiquitination and degradation of SMAD inhibitors such as smad7, inducing their proteasomal degradation and thereby enhancing the transcriptional activity of TGF-beta and BMP. Specifically binds polysumoylated chains via SUMO interaction motifs (SIMs) and mediates ubiquitination of sumoylated substrates. The regulation of the BMP-SMAD signaling is however independent of sumoylation and is not dependent of SUMO interaction motifs (SIMs). This Xenopus tropicalis (Western clawed frog) protein is E3 ubiquitin-protein ligase arkadia (rnf111).